The primary structure comprises 147 residues: uncharacterized protein (147 aa).

Disordered stretches follow at residues 1–49 (MRTP…NLNE) and 125–147 (SPSP…RKSN). Composition is skewed to low complexity over residues 8-49 (NNNY…NLNE) and 125-140 (SPSP…PQNT).

This is an uncharacterized protein from Dictyostelium discoideum (Social amoeba).